The sequence spans 211 residues: 1-deoxy-D-xylulose 5-phosphate reductoisomerase (211 aa).

Residue Asp-14 participates in Mn(2+) binding. Residues Ser-15, Glu-16, Ser-40, His-63, Ser-76, Asn-81, Lys-82, and Glu-85 each contribute to the 1-deoxy-D-xylulose 5-phosphate site. Mn(2+) is bound at residue Glu-16. Mn(2+) is bound at residue Glu-85.

Belongs to the DXR family. It depends on Mn(2+) as a cofactor. The cofactor is Mg(2+). In terms of tissue distribution, mostly expressed in flowers and, to a lower extent, in leaves.

It localises to the plastid. The protein localises to the chloroplast stroma. The catalysed reaction is 2-C-methyl-D-erythritol 4-phosphate + NADP(+) = 1-deoxy-D-xylulose 5-phosphate + NADPH + H(+). It participates in isoprenoid biosynthesis; isopentenyl diphosphate biosynthesis via DXP pathway; isopentenyl diphosphate from 1-deoxy-D-xylulose 5-phosphate: step 1/6. Enzyme of the plastid non-mevalonate pathway for isoprenoid biosynthesis that catalyzes the NADPH-dependent rearrangement and reduction of 1-deoxy-D-xylulose-5-phosphate (DXP) to 2-C-methyl-D-erythritol 4-phosphate (MEP). Required for chloroplast development. This chain is 1-deoxy-D-xylulose 5-phosphate reductoisomerase, found in Thymus vulgaris (Thyme).